The chain runs to 293 residues: Acetylglutamate kinase (293 aa).

Residues 60 to 61 (GG), Arg-82, and Asn-188 each bind substrate.

It belongs to the acetylglutamate kinase family. ArgB subfamily.

It localises to the cytoplasm. The enzyme catalyses N-acetyl-L-glutamate + ATP = N-acetyl-L-glutamyl 5-phosphate + ADP. It participates in amino-acid biosynthesis; L-arginine biosynthesis; N(2)-acetyl-L-ornithine from L-glutamate: step 2/4. In terms of biological role, catalyzes the ATP-dependent phosphorylation of N-acetyl-L-glutamate. The chain is Acetylglutamate kinase from Methanothermobacter thermautotrophicus (strain ATCC 29096 / DSM 1053 / JCM 10044 / NBRC 100330 / Delta H) (Methanobacterium thermoautotrophicum).